We begin with the raw amino-acid sequence, 571 residues long: Methionine--tRNA ligase (571 aa).

The short motif at 10 to 20 is the 'HIGH' region element; sequence PYVNAVPHLGN. Residues cysteine 143, cysteine 146, cysteine 156, and cysteine 159 each coordinate Zn(2+). The 'KMSKS' region signature appears at 333–337; sequence KFSKS. Position 336 (lysine 336) interacts with ATP.

It belongs to the class-I aminoacyl-tRNA synthetase family. MetG type 1 subfamily. Zn(2+) is required as a cofactor.

It is found in the cytoplasm. It carries out the reaction tRNA(Met) + L-methionine + ATP = L-methionyl-tRNA(Met) + AMP + diphosphate. Functionally, is required not only for elongation of protein synthesis but also for the initiation of all mRNA translation through initiator tRNA(fMet) aminoacylation. In Sulfolobus acidocaldarius (strain ATCC 33909 / DSM 639 / JCM 8929 / NBRC 15157 / NCIMB 11770), this protein is Methionine--tRNA ligase.